The chain runs to 338 residues: Oxygen-dependent coproporphyrinogen-III oxidase (338 aa).

Ser104 lines the substrate pocket. The a divalent metal cation site is built by His108 and His118. Residue His118 is the Proton donor of the active site. 120 to 122 (NYR) lines the substrate pocket. Residues His152 and His182 each contribute to the a divalent metal cation site. An important for dimerization region spans residues 274 to 309 (YVEFNLVYDRGTIFGLQTNGRTESILMSLPPLVRWE).

The protein belongs to the aerobic coproporphyrinogen-III oxidase family. Homodimer. Requires a divalent metal cation as cofactor.

It localises to the cytoplasm. The catalysed reaction is coproporphyrinogen III + O2 + 2 H(+) = protoporphyrinogen IX + 2 CO2 + 2 H2O. It functions in the pathway porphyrin-containing compound metabolism; protoporphyrin-IX biosynthesis; protoporphyrinogen-IX from coproporphyrinogen-III (O2 route): step 1/1. In terms of biological role, involved in the heme and chlorophyll biosynthesis. Catalyzes the aerobic oxidative decarboxylation of propionate groups of rings A and B of coproporphyrinogen-III to yield the vinyl groups in protoporphyrinogen-IX. This Thermosynechococcus vestitus (strain NIES-2133 / IAM M-273 / BP-1) protein is Oxygen-dependent coproporphyrinogen-III oxidase.